Reading from the N-terminus, the 343-residue chain is Small ribosomal subunit biogenesis GTPase RsgA (343 aa).

The CP-type G domain occupies 116–275; sequence RGQLKPVAAN…LIDSPGIREF (160 aa). GTP contacts are provided by residues 163 to 166 and 217 to 225; these read NKFD and GQSGVGKSS. Zn(2+) is bound by residues C299, C304, H306, and C312.

The protein belongs to the TRAFAC class YlqF/YawG GTPase family. RsgA subfamily. In terms of assembly, monomer. Associates with 30S ribosomal subunit, binds 16S rRNA. It depends on Zn(2+) as a cofactor.

The protein localises to the cytoplasm. One of several proteins that assist in the late maturation steps of the functional core of the 30S ribosomal subunit. Helps release RbfA from mature subunits. May play a role in the assembly of ribosomal proteins into the subunit. Circularly permuted GTPase that catalyzes slow GTP hydrolysis, GTPase activity is stimulated by the 30S ribosomal subunit. In Pseudomonas fluorescens (strain SBW25), this protein is Small ribosomal subunit biogenesis GTPase RsgA.